We begin with the raw amino-acid sequence, 200 residues long: Recombination protein RecR (200 aa).

The C4-type zinc finger occupies Cys-59–Cys-74. In terms of domain architecture, Toprim spans Ser-82–Pro-177.

The protein belongs to the RecR family.

In terms of biological role, may play a role in DNA repair. It seems to be involved in an RecBC-independent recombinational process of DNA repair. It may act with RecF and RecO. The protein is Recombination protein RecR of Bifidobacterium longum subsp. infantis (strain ATCC 15697 / DSM 20088 / JCM 1222 / NCTC 11817 / S12).